Reading from the N-terminus, the 130-residue chain is Small ribosomal subunit protein uS8 (130 aa).

This sequence belongs to the universal ribosomal protein uS8 family. Part of the 30S ribosomal subunit.

Functionally, one of the primary rRNA binding proteins, it binds directly to 16S rRNA central domain where it helps coordinate assembly of the platform of the 30S subunit. This chain is Small ribosomal subunit protein uS8, found in Haloquadratum walsbyi (strain DSM 16790 / HBSQ001).